A 99-amino-acid chain; its full sequence is Putative UPF0320 protein YDR543C (99 aa).

The segment at 80–99 (EKSPPKSPKHKNILSFNNNT) is disordered.

This sequence belongs to the UPF0320 family.

This Saccharomyces cerevisiae (strain ATCC 204508 / S288c) (Baker's yeast) protein is Putative UPF0320 protein YDR543C.